Here is a 152-residue protein sequence, read N- to C-terminus: Small ribosomal subunit protein bS6 (152 aa).

A disordered region spans residues 96–152; it reads HEEGPSAMLQKRDRDDRGERGDRGDRGDRGDRGFGGREDRPRRPRPTEESHGGEEEV.

The protein belongs to the bacterial ribosomal protein bS6 family.

Its function is as follows. Binds together with bS18 to 16S ribosomal RNA. The polypeptide is Small ribosomal subunit protein bS6 (Xanthobacter autotrophicus (strain ATCC BAA-1158 / Py2)).